The sequence spans 177 residues: Alkyl hydroperoxide reductase AhpD (177 aa).

Cysteine 130 (proton donor) is an active-site residue. An intrachain disulfide couples cysteine 130 to cysteine 133. Cysteine 133 serves as the catalytic Cysteine sulfenic acid (-SOH) intermediate.

It belongs to the AhpD family. As to quaternary structure, homotrimer.

The enzyme catalyses N(6)-[(R)-dihydrolipoyl]-L-lysyl-[lipoyl-carrier protein] + a hydroperoxide = N(6)-[(R)-lipoyl]-L-lysyl-[lipoyl-carrier protein] + an alcohol + H2O. In terms of biological role, antioxidant protein with alkyl hydroperoxidase activity. Required for the reduction of the AhpC active site cysteine residues and for the regeneration of the AhpC enzyme activity. In Mycolicibacterium smegmatis (strain ATCC 700084 / mc(2)155) (Mycobacterium smegmatis), this protein is Alkyl hydroperoxide reductase AhpD.